We begin with the raw amino-acid sequence, 1168 residues long: Transcription-repair-coupling factor (1168 aa).

In terms of domain architecture, Helicase ATP-binding spans 633 to 794 (DMQKSRPMDR…MLGVRDLSVI (162 aa)). An ATP-binding site is contributed by 646-653 (GDVGYGKT). Residues 747–750 (DEEQ) carry the DEEQ box motif. The Helicase C-terminal domain occupies 808 to 969 (VLEQNMSFIK…GFKIAMRDLN (162 aa)).

The protein in the N-terminal section; belongs to the UvrB family. In the C-terminal section; belongs to the helicase family. RecG subfamily.

Its subcellular location is the cytoplasm. Its function is as follows. Couples transcription and DNA repair by recognizing RNA polymerase (RNAP) stalled at DNA lesions. Mediates ATP-dependent release of RNAP and its truncated transcript from the DNA, and recruitment of nucleotide excision repair machinery to the damaged site. This chain is Transcription-repair-coupling factor, found in Staphylococcus aureus (strain MSSA476).